We begin with the raw amino-acid sequence, 386 residues long: Rhomboid domain-containing protein 3 (386 aa).

5 helical membrane passes run 20–40 (VLML…LVLA), 58–78 (LGHT…TVGW), 92–112 (ASAL…GLGL), 141–161 (GALP…LLSS), and 163–183 (PPFL…AGAF). The 39-residue stretch at 324-362 (VSSLRLQQLERMGFPTEQAVVALAATGRVEGAVSLLVGG) folds into the UBA domain.

The protein localises to the membrane. This is Rhomboid domain-containing protein 3 (RHBDD3) from Homo sapiens (Human).